Consider the following 605-residue polypeptide: Cystathionine gamma-synthase-like enzyme iboG1 (605 aa).

Tyr-289 is a substrate binding site. Lys-393 carries the N6-(pyridoxal phosphate)lysine modification.

It belongs to the trans-sulfuration enzymes family. Requires pyridoxal 5'-phosphate as cofactor.

The protein operates within secondary metabolite biosynthesis. In terms of biological role, cystathionine gamma-synthase-like enzyme; part of the gene cluster that mediates the biosynthesis of the psychoactive metabolites ibotenic acid and muscimol. The first committed step is glutamate hydroxylation by the 2-oxoglutarate-dependent dioxygenase iboH, and the last step is decarboxylation of ibotenic acid to muscimol by the decarboxylase iboD. The order of the intermediate reactions is somewhat ambiguous. IboA likely activates the carboxylic acid at position 5 to introduce an amide bond, and the flavin monooxygenase iboF generates the N-O bond. There are several options for the latter step. One option is that iboF directly hydroxylates the amide nitrogen formed by iboA to produce a hydroxamic acid species. Another option is that iboF hydroxylates an external N-containing compound, whose resulting N-O bond is subsequently introduced into the hydroxyglutamate scaffold. The paralogous PLP-dependent cystathionine gamma-synthase-like enzymes iboG1 and iboG2 are likely involved in substitution of the OH group at position 3 by the O-N moiety. The first cyclic intermediate is most probably tricholomic acid which is likely desaturated to ibotenic acid by the cytochrome P450 monooxygenase iboC. This chain is Cystathionine gamma-synthase-like enzyme iboG1 (iboG1), found in Amanita muscaria (strain Koide BX008).